A 93-amino-acid polypeptide reads, in one-letter code: MPRSLKKGPFVDDHLLKKVEAQNARGTKNVIKTWSRRSMIVPEMIGHTIAVHDGRKHVPVFITEAMIGHKLGEFAPTRTFRGHVKEDRRSRRG.

It belongs to the universal ribosomal protein uS19 family.

Its function is as follows. Protein S19 forms a complex with S13 that binds strongly to the 16S ribosomal RNA. The chain is Small ribosomal subunit protein uS19 from Acidothermus cellulolyticus (strain ATCC 43068 / DSM 8971 / 11B).